Consider the following 192-residue polypeptide: UPF0312 protein Ent638_1570 (192 aa).

The N-terminal stretch at 1-22 (MKKRLLGIALGSLLFTTGSAVA) is a signal peptide.

It belongs to the UPF0312 family. Type 1 subfamily.

The protein localises to the periplasm. This Enterobacter sp. (strain 638) protein is UPF0312 protein Ent638_1570.